Reading from the N-terminus, the 132-residue chain is Cytidine deaminase (132 aa).

The 128-residue stretch at 1–128 (MDRQMLIKEA…ELLPGAFTAE (128 aa)) folds into the CMP/dCMP-type deaminase domain. Position 42-44 (42-44 (NIE)) interacts with substrate. Cys53 is a Zn(2+) binding site. Glu55 acts as the Proton donor in catalysis. Residues Cys86 and Cys89 each contribute to the Zn(2+) site.

Belongs to the cytidine and deoxycytidylate deaminase family. It depends on Zn(2+) as a cofactor.

The catalysed reaction is cytidine + H2O + H(+) = uridine + NH4(+). It catalyses the reaction 2'-deoxycytidine + H2O + H(+) = 2'-deoxyuridine + NH4(+). Its function is as follows. This enzyme scavenges exogenous and endogenous cytidine and 2'-deoxycytidine for UMP synthesis. The chain is Cytidine deaminase (cdd) from Halalkalibacterium halodurans (strain ATCC BAA-125 / DSM 18197 / FERM 7344 / JCM 9153 / C-125) (Bacillus halodurans).